A 214-amino-acid chain; its full sequence is Rac-like GTP-binding protein 3 (214 aa).

15–22 (GDGAVGKT) contributes to the GTP binding site. The Effector region motif lies at 37 to 45 (YIPTVFDNF). GTP contacts are provided by residues 62–66 (DTAGQ) and 120–123 (TKLD).

Belongs to the small GTPase superfamily. Rho family. May be palmitoylated.

The protein resides in the cytoplasm. It is found in the membrane. In terms of biological role, inactive GDP-bound Rho GTPases reside in the cytosol, are found in a complex with Rho GDP-dissociation inhibitors (Rho GDIs), and are released from the GDI protein in order to translocate to membranes upon activation. This is Rac-like GTP-binding protein 3 (RAC3) from Oryza sativa subsp. japonica (Rice).